Reading from the N-terminus, the 522-residue chain is Perilipin-1 (522 aa).

Phosphoserine is present on Ser81. Thr85 bears the Phosphothreonine mark. A phosphoserine mark is found at Ser126, Ser130, Ser132, Ser137, and Ser174. 2 disordered regions span residues 195-217 (DKEESAPAPGHQQAQKSPKAKPS) and 287-318 (LAAAQEEDHEDQTDTEGEDTEEEEELETEENK). The segment covering 291–314 (QEEDHEDQTDTEGEDTEEEEELET) has biased composition (acidic residues). Residues 291 to 319 (QEEDHEDQTDTEGEDTEEEEELETEENKF) form a required for interaction with CIDEC region. 2 positions are modified to phosphothreonine: Thr299 and Thr301. 3 positions are modified to phosphoserine: Ser382, Ser384, and Ser408. Residues 413 to 522 (ESEFRDIDNP…THYSQLRKKS (110 aa)) form a disordered region. Over residues 414 to 435 (SEFRDIDNPPAEVERREAERRA) the composition is skewed to basic and acidic residues. Phosphoserine occurs at positions 436, 497, and 499.

Belongs to the perilipin family. In terms of assembly, interacts with ABHD5. Interacts with CIDEC. Interacts with AQP7. Post-translationally, major cAMP-dependent protein kinase-substrate in adipocytes, also dephosphorylated by PP1. When phosphorylated, may be maximally sensitive to HSL and when unphosphorylated, may play a role in the inhibition of lipolysis, by acting as a barrier in lipid droplet. In terms of tissue distribution, detected in adipocytes from white adipose tissue (at protein level). Detected in visceral adipose tissue and mammary gland.

The protein localises to the endoplasmic reticulum. It is found in the lipid droplet. In terms of biological role, modulator of adipocyte lipid metabolism. Coats lipid storage droplets to protect them from breakdown by hormone-sensitive lipase (HSL). Its absence may result in leanness. Plays a role in unilocular lipid droplet formation by activating CIDEC. Their interaction promotes lipid droplet enlargement and directional net neutral lipid transfer. May modulate lipolysis and triglyceride levels. In Homo sapiens (Human), this protein is Perilipin-1 (PLIN1).